The chain runs to 233 residues: Lysine exporter LysE (233 aa).

Residues 1–2 are Cytoplasmic-facing; the sequence is ME. The helical transmembrane segment at 3-23 threads the bilayer; that stretch reads IFITGLLLGASLLLSIGPQNV. Topologically, residues 24-65 are periplasmic; that stretch reads LVIKQGIKREGLIAVLLVCLISDVFLFIAGTLGVDLLSNAAP. Residues 66–86 form a helical membrane-spanning segment; it reads IVLDIMRWGGIAYLLWFAVMA. Residues 87 to 143 lie on the Cytoplasmic side of the membrane; the sequence is AKDAMTNKVEAPQIIEETEPTVPDDTPLGGSAVATDTRNRVRVEVSVDKQRVWVKPM. Residues 144–164 form a helical membrane-spanning segment; sequence LMAIVLTWLNPNAYLDAFVFI. Residues 165-176 are Periplasmic-facing; sequence GGVGAQYGDTGR. Residues 177-197 traverse the membrane as a helical segment; the sequence is WIFAAGAFAASLIWFPLVGFG. The Cytoplasmic portion of the chain corresponds to 198–212; it reads AAALSRPLSSPKVWR. A helical transmembrane segment spans residues 213 to 233; sequence WINVVVAVVMTALAIKLMLMG.

This sequence belongs to the LysE/ArgO transporter (TC 2.A.75) family.

The protein resides in the cell inner membrane. With respect to regulation, transport process is modulated by three forces: the membrane potential, the chemical potential of lysine, and the proton gradient. Strongly inhibited by CCCP and valinomycin. In terms of biological role, catalyzes the efflux of L-lysine. Can also export L-arginine and L-citrulline. The lysEG system prevents bacteriostasis due to elevated L-lysine or L-arginine concentrations that arise during growth in the presence of peptides or in mutants possessing a deregulated biosynthesis pathway. In vitro, can also export D-lysine during biotechnological production of D-amino acids. This chain is Lysine exporter LysE, found in Corynebacterium glutamicum (strain ATCC 13032 / DSM 20300 / JCM 1318 / BCRC 11384 / CCUG 27702 / LMG 3730 / NBRC 12168 / NCIMB 10025 / NRRL B-2784 / 534).